The chain runs to 71 residues: UPF0437 protein asl1434 (71 aa).

It belongs to the UPF0437 family.

In Nostoc sp. (strain PCC 7120 / SAG 25.82 / UTEX 2576), this protein is UPF0437 protein asl1434.